Here is a 308-residue protein sequence, read N- to C-terminus: Folate transporter 1, chloroplastic (308 aa).

Solcar repeat units lie at residues 4–94, 104–192, and 213–299; these read SWQW…AKQR, LSPA…LRKI, and ADYA…VLKL. 6 helical membrane passes run 10–30, 74–91, 110–130, 164–184, 216–236, and 274–293; these read ATAG…LDVV, VIGS…YGRA, LASA…IWLV, ALYK…IQFT, AALG…FQVI, and GLTA…FIVY.

The protein belongs to the mitochondrial carrier (TC 2.A.29) family. As to expression, ubiquitous.

The protein resides in the plastid. It is found in the chloroplast membrane. Functionally, mediates folate import into chloroplast. This chain is Folate transporter 1, chloroplastic (FOLT1), found in Arabidopsis thaliana (Mouse-ear cress).